Reading from the N-terminus, the 66-residue chain is UPF0434 protein Nwi_0075 (66 aa).

The protein belongs to the UPF0434 family.

In Nitrobacter winogradskyi (strain ATCC 25391 / DSM 10237 / CIP 104748 / NCIMB 11846 / Nb-255), this protein is UPF0434 protein Nwi_0075.